The sequence spans 119 residues: Large ribosomal subunit protein bL19 (119 aa).

This sequence belongs to the bacterial ribosomal protein bL19 family.

This protein is located at the 30S-50S ribosomal subunit interface and may play a role in the structure and function of the aminoacyl-tRNA binding site. The sequence is that of Large ribosomal subunit protein bL19 from Limosilactobacillus fermentum (strain NBRC 3956 / LMG 18251) (Lactobacillus fermentum).